Here is a 1067-residue protein sequence, read N- to C-terminus: Kinesin-like protein KIF11 (1067 aa).

The 342-residue stretch at 18–359 (NIQVVVRCRP…LEYANRAKNI (342 aa)) folds into the Kinesin motor domain. Residue 105–112 (GQTGTGKT) participates in ATP binding. The stretch at 365 to 480 (VNQKLTKRAL…SKEQLAQEAF (116 aa)) forms a coiled coil. Threonine 937 bears the Phosphothreonine; by CDK1 mark. At serine 1046 the chain carries Phosphoserine; by NEK6. The tract at residues 1048-1067 (IMDEAEQSLPKSKLPLRMQN) is disordered.

This sequence belongs to the TRAFAC class myosin-kinesin ATPase superfamily. Kinesin family. BimC subfamily. Heterotetramer of two heavy and two light chains. Interacts with aurka. Phosphorylation of Thr-937 during mitosis controls the association of this protein with the spindle apparatus. In terms of processing, a subset of this protein primarily localized at the spindle pole is phosphorylated by NEK6 during mitosis. Post-translationally, phosphorylated on a serine residue by aurka.

It localises to the cytoplasm. It is found in the cytoskeleton. The protein resides in the spindle pole. Functionally, plus end-directed motor protein required for establishing a bipolar spindle. Associates with both interphase and mitotic spindle microtubules. May be involved in nuclear divisions taking place during the development of unfertilized eggs. Required in non-mitotic cells for transport of secretory proteins from the Golgi complex to the cell surface. The sequence is that of Kinesin-like protein KIF11 from Xenopus tropicalis (Western clawed frog).